Reading from the N-terminus, the 676-residue chain is Capsid vertex component 1 (676 aa).

Positions 253–264 (HPVRPSSSRVAS) are enriched in low complexity. Residues 253-308 (HPVRPSSSRVASGLLQSAKGHGAQTSNTDPINNGSFDGVLEPPGQGRFTGKKNNSS) are disordered. Residues 275-287 (AQTSNTDPINNGS) are compositionally biased toward polar residues.

The protein belongs to the herpesviridae CVC1 protein family. In terms of assembly, interacts (via C-terminus) with capsid vertex component 2/CVC2.

Its subcellular location is the virion. The protein resides in the host nucleus. Capsid vertex-specific component that plays a role during viral DNA encapsidation, assuring correct genome cleavage and presumably stabilizing capsids that contain full-length viral genomes. This chain is Capsid vertex component 1, found in Varicella-zoster virus (strain Dumas) (HHV-3).